Reading from the N-terminus, the 146-residue chain is Large ribosomal subunit protein uL15 (146 aa).

The tract at residues 1-51 (MKLHELQPAPGSRKERNRVGRGIGSGNGKTSGKGHKGQNARSGGGVRIGFE) is disordered. 2 stretches are compositionally biased toward gly residues: residues 21–31 (RGIGSGNGKTS) and 42–51 (SGGGVRIGFE).

This sequence belongs to the universal ribosomal protein uL15 family. Part of the 50S ribosomal subunit.

Binds to the 23S rRNA. This Anoxybacillus flavithermus (strain DSM 21510 / WK1) protein is Large ribosomal subunit protein uL15.